A 927-amino-acid chain; its full sequence is Cell division control protein 15 (927 aa).

The region spanning 20–273 is the F-BAR domain; that stretch reads VKFRDNFWGS…TLENTNIDED (254 aa). Positions 108–207 form a coiled coil; sequence QQINTELRNK…AEYRETNELL (100 aa). The segment covering 321-354 has biased composition (low complexity); sequence SRPSASASLASSPTRSAFRPKTSETVSSEVVSSP. Disordered regions lie at residues 321-370, 390-409, 423-495, 509-550, and 597-857; these read SRPS…SNEQ, ESQKPVLTGSSMRRPSVTSP, VRSS…TSLG, PTSP…DELE, and SSSM…VDPR. Ser-331 and Ser-332 each carry phosphoserine. The span at 397-409 shows a compositional bias: polar residues; it reads TGSSMRRPSVTSP. The segment covering 444–461 has biased composition (basic and acidic residues); sequence PEVKEGKNSENAITKDND. Composition is skewed to polar residues over residues 465–482, 513–546, and 616–625; these read LSSQLQPTATGSRSSRLS, FMGSSFSNMGSRSTSPTKEGFASNQHATGASVQS, and LSKTSSSTRL. Thr-529 is modified (phosphothreonine). 2 positions are modified to phosphoserine: Ser-636 and Ser-639. A compositionally biased stretch (polar residues) spans 658 to 675; the sequence is TSAQMQRMSNSFASQTKQ. Residues 680 to 691 are compositionally biased toward basic and acidic residues; that stretch reads QRTENSARESLR. The span at 695-714 shows a compositional bias: low complexity; sequence SNMSRSPSPMLSRRSSTLRP. Ser-700 bears the Phosphoserine mark. Polar residues-rich tracts occupy residues 718-730 and 739-775; these read RSASSLSVRQSDV and ARGQSVSGQQRPSSSMSLYGEYNKSQPQLSMQRSVSP. A Phosphoserine modification is found at Ser-774. A compositionally biased stretch (low complexity) spans 784–813; sequence SSSVLQSQKSTSSNTSNRNNGGYSGSRPSS. Positions 823-853 are enriched in polar residues; that stretch reads SGRSMRQVSQRSTSRARSPEPTNRNSVQSKN. The SH3 domain occupies 866–927; that stretch reads PILGYVIALY…LFPSNFVQTV (62 aa).

It is found in the cytoplasm. It localises to the cytoskeleton. After the onset of mitosis, forms a ring-like structure which colocalizes with the medial actin ring. Appears to mediate cytoskeletal rearrangements required for cytokinesis. Essential for viability. The sequence is that of Cell division control protein 15 (cdc15) from Schizosaccharomyces pombe (strain 972 / ATCC 24843) (Fission yeast).